A 134-amino-acid polypeptide reads, in one-letter code: MCEQLVCIFTYAYLKINLTKALGHHNPSYPVARAQPQTMFPSASECNAFPRVSKVPNRSGAAETALLVRVLPKPLKSQASLLSLPFIHITEQLSTHICVVLFKLFHVCLFTINNMNDCSMDAAERNAEGGLQLE.

This is an uncharacterized protein from Homo sapiens (Human).